The chain runs to 177 residues: Large ribosomal subunit protein uL16m (177 aa).

The protein belongs to the universal ribosomal protein uL16 family.

It is found in the mitochondrion. This Brassica napus (Rape) protein is Large ribosomal subunit protein uL16m (RPL16).